The following is a 299-amino-acid chain: NAD kinase (299 aa).

Asp-78 acts as the Proton acceptor in catalysis. NAD(+)-binding positions include 78–79 (DG), 151–152 (ND), Lys-162, Arg-179, Asp-181, 192–197 (TAYALS), and Gln-252.

It belongs to the NAD kinase family. A divalent metal cation is required as a cofactor.

The protein localises to the cytoplasm. The catalysed reaction is NAD(+) + ATP = ADP + NADP(+) + H(+). Its function is as follows. Involved in the regulation of the intracellular balance of NAD and NADP, and is a key enzyme in the biosynthesis of NADP. Catalyzes specifically the phosphorylation on 2'-hydroxyl of the adenosine moiety of NAD to yield NADP. In Coxiella burnetii (strain CbuG_Q212) (Coxiella burnetii (strain Q212)), this protein is NAD kinase.